Consider the following 169-residue polypeptide: TNTPEQDRYLQVKKYLEYVVVDNNMYRNYGNAGPCVMSAEISFEPLQEFSSCDIQEPLSQDIVQPAVCGNYYVEVGGECDCGSPKPCRSACCNAATCKLQREHQCDSGECCEKKDDCDLPEICTGRSAKCSCVISQGDLGYGMVEPGTKCTDGMVCSNEQCVDVQTAAK.

Positions 14–57 constitute a Peptidase M12B domain; that stretch reads KYLEYVVVDNNMYRNYGNAGPCVMSAEISFEPLQEFSSCDIQEP. Residues 65-129 form the Disintegrin domain; it reads PAVCGNYYVE…PEICTGRSAK (65 aa). Disulfide bonds link Cys68–Cys97, Cys79–Cys92, Cys81–Cys87, Cys105–Cys111, Cys110–Cys123, and Cys150–Cys161. A D/ECD-tripeptide motif is present at residues 116 to 118; it reads DCD.

It belongs to the venom metalloproteinase (M12B) family. P-III subfamily. P-IIIa sub-subfamily. In terms of assembly, monomer. It depends on Zn(2+) as a cofactor. In terms of tissue distribution, expressed by the venom gland.

It is found in the secreted. With respect to regulation, inhibited by EDTA, but not by PMSF. In terms of biological role, snake venom zinc metalloproteinase that calcium-independently catalyzes the conversion of prothrombin (F2) to alpha-thrombin through the formation of a thrombin intermediate. In Micropechis ikaheca (New Guinean small-eyed snake), this protein is Zinc metalloproteinase-disintegrin-like mikarin.